A 303-amino-acid chain; its full sequence is UDP-N-acetylenolpyruvoylglucosamine reductase (303 aa).

Residues 30 to 195 (KTGGPADLLA…LSARFEMAKG (166 aa)) enclose the FAD-binding PCMH-type domain. The active site involves R174. The active-site Proton donor is S224. E294 is a catalytic residue.

The protein belongs to the MurB family. FAD is required as a cofactor.

It localises to the cytoplasm. It catalyses the reaction UDP-N-acetyl-alpha-D-muramate + NADP(+) = UDP-N-acetyl-3-O-(1-carboxyvinyl)-alpha-D-glucosamine + NADPH + H(+). Its pathway is cell wall biogenesis; peptidoglycan biosynthesis. Cell wall formation. The protein is UDP-N-acetylenolpyruvoylglucosamine reductase of Latilactobacillus sakei subsp. sakei (strain 23K) (Lactobacillus sakei subsp. sakei).